The primary structure comprises 353 residues: Holliday junction branch migration complex subunit RuvB (353 aa).

The large ATPase domain (RuvB-L) stretch occupies residues 4–185 (ADRLITAAGG…FGIVQRLEFY (182 aa)). Residues I24, R25, G66, K69, T70, T71, 132-134 (EDF), R175, Y185, and R222 each bind ATP. T70 lines the Mg(2+) pocket. The segment at 186–256 (NIADLSTIVS…TADKALNLLD (71 aa)) is small ATPAse domain (RuvB-S). Residues 259 to 353 (EHGFDHQDRR…DDVVDDPADL (95 aa)) are head domain (RuvB-H). Positions 295, 314, and 319 each coordinate DNA.

Belongs to the RuvB family. Homohexamer. Forms an RuvA(8)-RuvB(12)-Holliday junction (HJ) complex. HJ DNA is sandwiched between 2 RuvA tetramers; dsDNA enters through RuvA and exits via RuvB. An RuvB hexamer assembles on each DNA strand where it exits the tetramer. Each RuvB hexamer is contacted by two RuvA subunits (via domain III) on 2 adjacent RuvB subunits; this complex drives branch migration. In the full resolvosome a probable DNA-RuvA(4)-RuvB(12)-RuvC(2) complex forms which resolves the HJ.

The protein resides in the cytoplasm. It carries out the reaction ATP + H2O = ADP + phosphate + H(+). In terms of biological role, the RuvA-RuvB-RuvC complex processes Holliday junction (HJ) DNA during genetic recombination and DNA repair, while the RuvA-RuvB complex plays an important role in the rescue of blocked DNA replication forks via replication fork reversal (RFR). RuvA specifically binds to HJ cruciform DNA, conferring on it an open structure. The RuvB hexamer acts as an ATP-dependent pump, pulling dsDNA into and through the RuvAB complex. RuvB forms 2 homohexamers on either side of HJ DNA bound by 1 or 2 RuvA tetramers; 4 subunits per hexamer contact DNA at a time. Coordinated motions by a converter formed by DNA-disengaged RuvB subunits stimulates ATP hydrolysis and nucleotide exchange. Immobilization of the converter enables RuvB to convert the ATP-contained energy into a lever motion, pulling 2 nucleotides of DNA out of the RuvA tetramer per ATP hydrolyzed, thus driving DNA branch migration. The RuvB motors rotate together with the DNA substrate, which together with the progressing nucleotide cycle form the mechanistic basis for DNA recombination by continuous HJ branch migration. Branch migration allows RuvC to scan DNA until it finds its consensus sequence, where it cleaves and resolves cruciform DNA. This is Holliday junction branch migration complex subunit RuvB from Pseudomonas savastanoi pv. phaseolicola (strain 1448A / Race 6) (Pseudomonas syringae pv. phaseolicola (strain 1448A / Race 6)).